Here is a 346-residue protein sequence, read N- to C-terminus: Heat-inducible transcription repressor HrcA (346 aa).

The protein belongs to the HrcA family.

In terms of biological role, negative regulator of class I heat shock genes (grpE-dnaK-dnaJ and groELS operons). Prevents heat-shock induction of these operons. The polypeptide is Heat-inducible transcription repressor HrcA (Pediococcus pentosaceus (strain ATCC 25745 / CCUG 21536 / LMG 10740 / 183-1w)).